We begin with the raw amino-acid sequence, 342 residues long: UDP-3-O-acylglucosamine N-acyltransferase (342 aa).

Histidine 253 serves as the catalytic Proton acceptor.

It belongs to the transferase hexapeptide repeat family. LpxD subfamily. Homotrimer.

It carries out the reaction a UDP-3-O-[(3R)-3-hydroxyacyl]-alpha-D-glucosamine + a (3R)-hydroxyacyl-[ACP] = a UDP-2-N,3-O-bis[(3R)-3-hydroxyacyl]-alpha-D-glucosamine + holo-[ACP] + H(+). It functions in the pathway bacterial outer membrane biogenesis; LPS lipid A biosynthesis. Catalyzes the N-acylation of UDP-3-O-acylglucosamine using 3-hydroxyacyl-ACP as the acyl donor. Is involved in the biosynthesis of lipid A, a phosphorylated glycolipid that anchors the lipopolysaccharide to the outer membrane of the cell. This Rickettsia canadensis (strain McKiel) protein is UDP-3-O-acylglucosamine N-acyltransferase.